The sequence spans 403 residues: Serine/threonine-protein phosphatase 4 regulatory subunit 2-A (403 aa).

Polar residues-rich tracts occupy residues 140–149, 156–170, and 183–196; these read EKNNSTSLNR, PSNS…NVNG, and SLSS…LPDS. A disordered region spans residues 140–403; it reads EKNNSTSLNR…DAPEEPMEQD (264 aa). A compositionally biased stretch (basic and acidic residues) spans 197–211; it reads TENKESDLQQKEKSQ. Polar residues-rich tracts occupy residues 212 to 226 and 371 to 387; these read SDSA…ATTS and ATSS…SPME. The span at 388–403 shows a compositional bias: acidic residues; the sequence is NSEEATDAPEEPMEQD.

Belongs to the PPP4R2 family. Serine/threonine-protein phosphatase 4 (PP4) occurs in different assemblies of the catalytic and one or more regulatory subunits.

Its function is as follows. Regulatory subunit of serine/threonine-protein phosphatase 4 (PP4). The sequence is that of Serine/threonine-protein phosphatase 4 regulatory subunit 2-A (ppp4r2-a) from Xenopus laevis (African clawed frog).